A 457-amino-acid polypeptide reads, in one-letter code: F-box only protein 13 (457 aa).

The F-box domain maps to 64 to 110; it reads EFPMDDLNDDVLERVLSWLPTSCFFRMSSVCKRWKSSQTSKSFKLAC.

This chain is F-box only protein 13 (FBX13), found in Arabidopsis thaliana (Mouse-ear cress).